The following is a 256-amino-acid chain: Alcohol dehydrogenase (256 aa).

12-35 (FVAGLGGIGLDTSKELVKRDLKNL) contacts NAD(+). Serine 140 contacts substrate. The active-site Proton acceptor is the tyrosine 153.

The protein belongs to the short-chain dehydrogenases/reductases (SDR) family. Homodimer.

It carries out the reaction a primary alcohol + NAD(+) = an aldehyde + NADH + H(+). The enzyme catalyses a secondary alcohol + NAD(+) = a ketone + NADH + H(+). In Drosophila tsacasi (Fruit fly), this protein is Alcohol dehydrogenase (Adh).